The following is a 34-amino-acid chain: Cytochrome b6-f complex subunit 8 (34 aa).

The helical transmembrane segment at 3–23 threads the bilayer; that stretch reads IFQIGWAALAAIFTFSIAMVV.

This sequence belongs to the PetN family. The 4 large subunits of the cytochrome b6-f complex are cytochrome b6, subunit IV (17 kDa polypeptide, PetD), cytochrome f and the Rieske protein, while the 4 small subunits are PetG, PetL, PetM and PetN. The complex functions as a dimer.

It is found in the cellular thylakoid membrane. In terms of biological role, component of the cytochrome b6-f complex, which mediates electron transfer between photosystem II (PSII) and photosystem I (PSI), cyclic electron flow around PSI, and state transitions. The polypeptide is Cytochrome b6-f complex subunit 8 (Prochlorococcus marinus subsp. pastoris (strain CCMP1986 / NIES-2087 / MED4)).